The chain runs to 171 residues: uncharacterized protein (171 aa).

This is an uncharacterized protein from Aedes vexans (Inland floodwater mosquito).